The following is a 118-amino-acid chain: Holo-[acyl-carrier-protein] synthase (118 aa).

2 residues coordinate Mg(2+): D5 and E50.

Belongs to the P-Pant transferase superfamily. AcpS family. Mg(2+) is required as a cofactor.

Its subcellular location is the cytoplasm. It catalyses the reaction apo-[ACP] + CoA = holo-[ACP] + adenosine 3',5'-bisphosphate + H(+). Transfers the 4'-phosphopantetheine moiety from coenzyme A to a Ser of acyl-carrier-protein. This is Holo-[acyl-carrier-protein] synthase from Wolinella succinogenes (strain ATCC 29543 / DSM 1740 / CCUG 13145 / JCM 31913 / LMG 7466 / NCTC 11488 / FDC 602W) (Vibrio succinogenes).